The following is a 96-amino-acid chain: Small ribosomal subunit protein uS19 (96 aa).

It belongs to the universal ribosomal protein uS19 family.

Protein S19 forms a complex with S13 that binds strongly to the 16S ribosomal RNA. The sequence is that of Small ribosomal subunit protein uS19 from Solibacter usitatus (strain Ellin6076).